The sequence spans 136 residues: UPF0213 protein ASA_0550 (136 aa).

The region spanning 17–92 (GQWSIYLVRT…KQQSKAFKER (76 aa)) is the GIY-YIG domain.

This sequence belongs to the UPF0213 family.

In Aeromonas salmonicida (strain A449), this protein is UPF0213 protein ASA_0550.